Reading from the N-terminus, the 269-residue chain is Protein OPG079 (269 aa).

The protein belongs to the orthopoxvirus OPG079 family. In terms of assembly, homoomultimer (Potential). Interacts with the small subunit of ribonucleotide reductase. Interacts with host FAM111A; this interaction protomtes OPG079 degradation through autophagy.

Its subcellular location is the host cytoplasm. Plays an essential role in viral DNA replication. Binds to ssDNA with high affinity and localizes to cytoplasmic factories where nascent viral genomes accumulate. May disrupt loops, hairpins and other secondary structures present on ssDNA to reduce and eliminate pausing of viral DNA polymerase at specific sites during elongation. This is Protein OPG079 (OPG079) from Bos taurus (Bovine).